A 100-amino-acid polypeptide reads, in one-letter code: Large ribosomal subunit protein uL23 (100 aa).

The protein belongs to the universal ribosomal protein uL23 family. As to quaternary structure, part of the 50S ribosomal subunit. Contacts protein L29, and trigger factor when it is bound to the ribosome.

One of the early assembly proteins it binds 23S rRNA. One of the proteins that surrounds the polypeptide exit tunnel on the outside of the ribosome. Forms the main docking site for trigger factor binding to the ribosome. The protein is Large ribosomal subunit protein uL23 of Prochlorococcus marinus (strain MIT 9515).